Here is a 355-residue protein sequence, read N- to C-terminus: Probable butyrate kinase (355 aa).

This sequence belongs to the acetokinase family.

The protein resides in the cytoplasm. The enzyme catalyses butanoate + ATP = butanoyl phosphate + ADP. This chain is Probable butyrate kinase, found in Clostridium botulinum (strain Eklund 17B / Type B).